The sequence spans 310 residues: Aspartate carbamoyltransferase catalytic subunit (310 aa).

Carbamoyl phosphate contacts are provided by Arg60 and Thr61. An L-aspartate-binding site is contributed by Lys88. Positions 110, 138, and 141 each coordinate carbamoyl phosphate. Arg171 and Arg225 together coordinate L-aspartate. The carbamoyl phosphate site is built by Gly266 and Pro267.

Belongs to the aspartate/ornithine carbamoyltransferase superfamily. ATCase family. In terms of assembly, heterododecamer (2C3:3R2) of six catalytic PyrB chains organized as two trimers (C3), and six regulatory PyrI chains organized as three dimers (R2).

It catalyses the reaction carbamoyl phosphate + L-aspartate = N-carbamoyl-L-aspartate + phosphate + H(+). It functions in the pathway pyrimidine metabolism; UMP biosynthesis via de novo pathway; (S)-dihydroorotate from bicarbonate: step 2/3. Functionally, catalyzes the condensation of carbamoyl phosphate and aspartate to form carbamoyl aspartate and inorganic phosphate, the committed step in the de novo pyrimidine nucleotide biosynthesis pathway. The sequence is that of Aspartate carbamoyltransferase catalytic subunit from Christiangramia forsetii (strain DSM 17595 / CGMCC 1.15422 / KT0803) (Gramella forsetii).